The chain runs to 406 residues: DNA-binding transcriptional repressor Mlc (406 aa).

A DNA-binding region (H-T-H motif) is located at residues 33–42; the sequence is RIDLSRLAQL. Residues His247, Cys257, Cys259, and Cys264 each contribute to the Zn(2+) site.

Belongs to the ROK (NagC/XylR) family. Homodimer. Homotetramer. There is probably an equilibrium between the dimeric and the tetrameric form. Interacts with dephosphorylated PtsG. Mlc and PtsG EIIB domain form a complex with the 1:1 stoichiometry. Interacts with MtfA.

The protein localises to the cytoplasm. Activity is modulated by glucose. In the presence of glucose, is inhibited by interaction with the dephosphorylated form of PtsG, which sequesters Mlc in the inner membrane and prevents Mlc binding to its target promoters. The restriction of conformational freedom resulting from the anchoring of four ends of Mlc to the membrane could be the primary cause of its loss of DNA-binding activity in vivo. Activity is also inhibited by interaction with the Mlc titration factor A (mtfA). The inactivation mechanisms of Mlc by dephosphorylated PtsG and MtfA differ significantly. Functionally, global regulator of carbohydrate metabolism. Represses the expression of several genes involved in sugar transport and utilization, in particular phosphoenolpyruvate-carbohydrate phosphotransferase system (PTS) genes. Represses expression of ptsG (EIICB(Glc)), which encodes the PTS system glucose-specific EIICB component. Also represses the expression of the manXYZ operon, encoding the mannose-specific PTS system, expression of malT, encoding the transcriptional activator of the maltose regulon, and expression of the pts operon, composed of the genes ptsH, ptsI and crr. Represses its own expression. Acts by binding to the regulatory region of the target genes. This chain is DNA-binding transcriptional repressor Mlc, found in Escherichia coli (strain K12).